We begin with the raw amino-acid sequence, 407 residues long: M protein, serotype 2.1 (407 aa).

The first 41 residues, 1–41 (MARKDTNKQYSLRKLKTGTASVAVAVAVLGAGFANQTTVKA), serve as a signal peptide directing secretion. Residues 81-94 (VEEEHKKVEEEHKK) are 2 X 7 AA tandem repeats. Basic and acidic residues-rich tracts occupy residues 83–144 (EEHK…KRYQ), 152–229 (QLEK…EKQI), 237–264 (LSRD…EKQI), and 272–288 (LSRD…KVEA). Residues 83–289 (EEHKKVEEEH…REAKKKVEAD (207 aa)) form a disordered region. 4 C repeats span residues 151-185 (QQLE…EAEH), 186-220 (QKLK…EAEH), 221-255 (QKLK…EAEH), and 256-290 (QKLK…EADL). D repeat units follow at residues 323-328 (AKLEAE), 329-334 (AKALKE), 337-342 (AKQAEE), and 344-349 (AKLKGN). Residues 344–382 (AKLKGNQTPNAKVAPQANRSRSAMTQQKRTLPSTGETAN) are disordered. Polar residues predominate over residues 360-380 (ANRSRSAMTQQKRTLPSTGET). The LPXTG sorting signal motif lies at 374–378 (LPSTG). Thr377 carries the post-translational modification Pentaglycyl murein peptidoglycan amidated threonine. The propeptide at 378-407 (GETANPFFTAAAATVMVSAGMLALKRKEEN) is removed by sortase.

The protein belongs to the M protein family.

Its subcellular location is the secreted. It localises to the cell wall. Functionally, this protein is one of the different antigenic serotypes of protein M. Protein M is closely associated with virulence of the bacterium and can render the organism resistant to phagocytosis. This is M protein, serotype 2.1 (emmL2.1) from Streptococcus pyogenes.